The primary structure comprises 116 residues: Immunoglobulin heavy variable 2-4 (116 aa).

The N-terminal stretch at 1 to 19 (MAVLVLLFCLVTFPSCVLS) is a signal peptide. One can recognise an Ig-like domain in the interval 20–116 (QVQLKQSGPG…DDTAIYYCAK (97 aa)). Cysteines 41 and 114 form a disulfide.

The sequence is that of Immunoglobulin heavy variable 2-4 from Mus musculus (Mouse).